A 132-amino-acid polypeptide reads, in one-letter code: Small ribosomal subunit protein uS8c (132 aa).

It belongs to the universal ribosomal protein uS8 family. Part of the 30S ribosomal subunit.

It is found in the plastid. Its subcellular location is the chloroplast. Its function is as follows. One of the primary rRNA binding proteins, it binds directly to 16S rRNA central domain where it helps coordinate assembly of the platform of the 30S subunit. This Marchantia polymorpha (Common liverwort) protein is Small ribosomal subunit protein uS8c (rps8).